The following is a 243-amino-acid chain: Juxtaposed with another zinc finger protein 1 (243 aa).

The segment at 12–37 (NTCRFGGCGLHFPTLADLIEHIEDNH) adopts a C2H2-type 1 zinc-finger fold. The segment at 39-79 (DTDPRVLEKQELQQPTYVALSYINRFMTDAARREQESLKKK) is required for interaction with NR2C2. Residues 89 to 108 (SSSVSRGNVSTPPRHSSGSL) are compositionally biased toward polar residues. The segment at 89 to 151 (SSSVSRGNVS…SDSDESWTTE (63 aa)) is disordered. Residues threonine 109 and threonine 113 each carry the phosphothreonine modification. Residues 118–130 (PSSSFRSSTPTGS) show a composition bias toward low complexity. A compositionally biased stretch (acidic residues) spans 131-148 (EYDEEEVDYEESDSDESW). The C2H2-type 2 zinc-finger motif lies at 173–198 (FACPVPGCKKRYKNVNGIKYHAKNGH). Residues 208–230 (FKCRCGKSYKTAQGLRHHTINFH) form a C2H2-type 3; degenerate zinc finger.

As to quaternary structure, interacts with NR2C2 (via ligand-binding region). As to expression, expressed in range of tissues with highest expression levels in testis, liver, muscle and fat and lowest levels in kidney. Detected in liver and white adipose tissue (at protein level).

The protein localises to the nucleus. Its function is as follows. Acts as a transcriptional corepressor of orphan nuclear receptor NR2C2. Inhibits expression of the gluconeogenesis enzyme PCK2 through inhibition of NR2C2 activity. Also involved in transcriptional activation of NAMPT by promoting expression of PPARA and PPARD. Plays a role in lipid metabolism by suppressing lipogenesis, increasing lipolysis and decreasing lipid accumulation in adipose tissue. Plays a role in glucose homeostasis by improving glucose metabolism and insulin sensitivity. The chain is Juxtaposed with another zinc finger protein 1 (Jazf1) from Mus musculus (Mouse).